We begin with the raw amino-acid sequence, 62 residues long: Kininogen-1 (62 aa).

The N-terminal stretch at 1 to 22 is a signal peptide; it reads MDILKKSLFLVLFLGLVSFSIC. The tract at residues 24–62 is disordered; that stretch reads EEKRDTEEEENDDEIEEESEEKKREAPERPPGFTPFRIY. Over residues 30 to 42 the composition is skewed to acidic residues; sequence EEEENDDEIEEES. P54 bears the 4-hydroxyproline; partial mark. Y62 bears the Sulfotyrosine mark.

The protein belongs to the frog skin active peptide (FSAP) family. Bradykinin-related peptide subfamily. As to expression, expressed by the skin glands.

The protein localises to the secreted. Functionally, inhibits ACE with a Ki of 1.6 uM, and targets B2 bradykinin receptor (BDKRB2). Provokes contraction of smooth muscle preparation (ileum). In vivo, induces an early hyperalgesic effects in living rats after intraplantar injection. This is Kininogen-1 from Phyllomedusa sauvagei (Sauvage's leaf frog).